The chain runs to 538 residues: MEDSTEDIIKSFTLEQSPEIKPKPKSKTSDLTDIVYAMDDDSIKMKKFTIFDDKYDQNISDSEHDLTPIKRKRQSAQSAPPPPATKFSSSIPQKPTLSPKKLATSPTKNYTDHINQLRSGPNSPKKYQDDENIRSLKYEIKRLKQEQNLKLENLQHKIDYLTNERDELQNQLTSMSFENDKLTKKNRSLSHENNHLTLENSKLKTKEYSNEELQSENNKLQRVNSTLRNERDELVKDFNITRDKLKKYYDLYLHCQKAHAKEMKKRIEVDGDKPISDKPMADNSTNQELVDVLKKLSEMMIEQKKISEPSAAVEKDTTSEDKTPPIPNTANSSDTPRMVSDFLEDFIKRVFEEMSSNNKNTLSPKQAINSQTYSQPNNFSNNTVPPSQSAAYNPSNSQPAPPPQPATNFYSSSTPNTNGYNQSSQSDERPETFELPHVAKDHWLQRPTSERSTQSTKYMKMDPEDIRKLVSVITDQLKKEQKSEKPSNVVEMETPVEKCQCCHGNPRNVTDTNNNQKLCQSCLNKGDFTMSEFMGRSN.

Disordered regions lie at residues 1 to 31 and 57 to 129; these read MEDS…TSDL and QNIS…KYQD. 2 stretches are compositionally biased toward basic and acidic residues: residues 18–30 and 57–68; these read PEIK…KTSD and QNISDSEHDLTP. Composition is skewed to polar residues over residues 86–96 and 104–122; these read KFSSSIPQKPT and TSPT…SGPN. A coiled-coil region spans residues 144-237; that stretch reads KQEQNLKLEN…RNERDELVKD (94 aa). Residues 304 to 323 show a composition bias toward basic and acidic residues; it reads KKISEPSAAVEKDTTSEDKT. Disordered stretches follow at residues 304-338 and 355-458; these read KKIS…TPRM and SSNN…STKY. 2 stretches are compositionally biased toward polar residues: residues 355–392 and 407–425; these read SSNN…SAAY and TNFY…QSSQ. Residues 426 to 444 are compositionally biased toward basic and acidic residues; sequence SDERPETFELPHVAKDHWL. A compositionally biased stretch (polar residues) spans 446–457; sequence RPTSERSTQSTK.

It is found in the cytoplasm. The protein resides in the cytoskeleton. The protein localises to the microtubule organizing center. Its subcellular location is the spindle pole body. Functionally, plays a role in mitotic spindle pole body organization, possibly at the point of spindle pole body separation. Required for mitotic exit. The protein is Spindle pole body protein CSA6 of Candida albicans (strain SC5314 / ATCC MYA-2876) (Yeast).